The chain runs to 193 residues: Fibrillarin-like rRNA/tRNA 2'-O-methyltransferase (193 aa).

Residues 82 to 83, 100 to 101, 125 to 126, and 145 to 148 contribute to the S-adenosyl-L-methionine site; these read TT, EF, DA, and DVAQ.

Belongs to the methyltransferase superfamily. Fibrillarin family. Interacts with nop5. Component of box C/D small ribonucleoprotein (sRNP) particles that contain rpl7ae, FlpA and nop5, plus a guide RNA.

In terms of biological role, involved in pre-rRNA and tRNA processing. Utilizes the methyl donor S-adenosyl-L-methionine to catalyze the site-specific 2'-hydroxyl methylation of ribose moieties in rRNA and tRNA. Site specificity is provided by a guide RNA that base pairs with the substrate. Methylation occurs at a characteristic distance from the sequence involved in base pairing with the guide RNA. This Methanosarcina mazei (Methanosarcina frisia) protein is Fibrillarin-like rRNA/tRNA 2'-O-methyltransferase.